We begin with the raw amino-acid sequence, 192 residues long: Der GTPase-activating protein YihI (192 aa).

A disordered region spans residues 1-80 (MSRTKKTRRI…KAAVKEVKDP (80 aa)). Basic and acidic residues-rich tracts occupy residues 9–25 (RITD…KPEQ), 37–48 (TRYELDAKAREE), and 65–80 (DPAE…VKDP).

It belongs to the YihI family. As to quaternary structure, interacts with Der.

A GTPase-activating protein (GAP) that modifies Der/EngA GTPase function. May play a role in ribosome biogenesis. The polypeptide is Der GTPase-activating protein YihI (Actinobacillus pleuropneumoniae serotype 5b (strain L20)).